Here is a 200-residue protein sequence, read N- to C-terminus: 2-phospho-L-lactate guanylyltransferase (200 aa).

The protein belongs to the CofC family. Homodimer.

The catalysed reaction is (2S)-2-phospholactate + GTP + H(+) = (2S)-lactyl-2-diphospho-5'-guanosine + diphosphate. Its pathway is cofactor biosynthesis; coenzyme F420 biosynthesis. Its function is as follows. Guanylyltransferase that catalyzes the activation of (2S)-2-phospholactate (2-PL) as (2S)-lactyl-2-diphospho-5'-guanosine, via the condensation of 2-PL with GTP. It is involved in the biosynthesis of coenzyme F420, a hydride carrier cofactor. The sequence is that of 2-phospho-L-lactate guanylyltransferase from Ferroglobus placidus (strain DSM 10642 / AEDII12DO).